The chain runs to 484 residues: Aldehyde dehydrogenase family 3 member A2 (484 aa).

Over 1-463 (MERQVQRLRQ…FLLKQFNKGR (463 aa)) the chain is Cytoplasmic. 185 to 190 (GNTAVG) serves as a coordination point for NAD(+). Catalysis depends on residues E207 and C241. Residue S293 is modified to Phosphoserine. Residues 464 to 484 (LQLLLLVCLVAVAAVIVKDQL) traverse the membrane as a helical segment. The Prevents secretion from ER signature appears at 481–484 (KDQL).

The protein belongs to the aldehyde dehydrogenase family. In terms of assembly, homodimer. The N-terminus is blocked.

It is found in the microsome membrane. Its subcellular location is the endoplasmic reticulum membrane. The catalysed reaction is an aldehyde + NAD(+) + H2O = a carboxylate + NADH + 2 H(+). It carries out the reaction a fatty aldehyde + NAD(+) + H2O = a fatty acid + NADH + 2 H(+). The enzyme catalyses (2E)-hexadecenal + NAD(+) + H2O = (E)-hexadec-2-enoate + NADH + 2 H(+). It catalyses the reaction hexadecanoate + NADH + 2 H(+) = hexadecanal + NAD(+) + H2O. The catalysed reaction is 22-oxodocosanoate + NAD(+) + H2O = docosanedioate + NADH + 2 H(+). It carries out the reaction 2,6,10,14-tetramethylpentadecanal + NAD(+) + H2O = 2,6,10,14-tetramethylpentadecanoate + NADH + 2 H(+). The enzyme catalyses octadecanal + NAD(+) + H2O = octadecanoate + NADH + 2 H(+). It catalyses the reaction dodecanoate + NADH + 2 H(+) = dodecanal + NAD(+) + H2O. The catalysed reaction is decanal + NAD(+) + H2O = decanoate + NADH + 2 H(+). It carries out the reaction tetradecanal + NAD(+) + H2O = tetradecanoate + NADH + 2 H(+). The enzyme catalyses octanal + NAD(+) + H2O = octanoate + NADH + 2 H(+). It catalyses the reaction heptanal + NAD(+) + H2O = heptanoate + NADH + 2 H(+). The catalysed reaction is (2E,6E)-farnesal + NAD(+) + H2O = (2E,6E)-farnesoate + NADH + 2 H(+). Functionally, catalyzes the oxidation of medium and long-chain aliphatic aldehydes to fatty acids. Active on a variety of saturated and unsaturated aliphatic aldehydes between 6 and 24 carbons in length. Responsible for conversion of the sphingosine 1-phosphate (S1P) degradation product hexadecenal to hexadecenoic acid. The protein is Aldehyde dehydrogenase family 3 member A2 (Aldh3a2) of Rattus norvegicus (Rat).